A 369-amino-acid polypeptide reads, in one-letter code: uncharacterized protein (369 aa).

N6-(pyridoxal phosphate)lysine is present on Lys-184.

It belongs to the class-V pyridoxal-phosphate-dependent aminotransferase family. It depends on pyridoxal 5'-phosphate as a cofactor.

This is an uncharacterized protein from Helicobacter pylori (strain J99 / ATCC 700824) (Campylobacter pylori J99).